The following is a 142-amino-acid chain: Large ribosomal subunit protein uL11 (142 aa).

It belongs to the universal ribosomal protein uL11 family. Part of the ribosomal stalk of the 50S ribosomal subunit. Interacts with L10 and the large rRNA to form the base of the stalk. L10 forms an elongated spine to which L12 dimers bind in a sequential fashion forming a multimeric L10(L12)X complex. Post-translationally, one or more lysine residues are methylated.

In terms of biological role, forms part of the ribosomal stalk which helps the ribosome interact with GTP-bound translation factors. This is Large ribosomal subunit protein uL11 from Vibrio campbellii (strain ATCC BAA-1116).